A 147-amino-acid polypeptide reads, in one-letter code: uncharacterized protein (147 aa).

2 consecutive transmembrane segments (helical) span residues 35–55 and 62–82; these read TIQLAGWISVLFMLGYNFGNH and IWLLVITALLVIGLLIHLFEP.

Has been detected in a cytochrome bc1-aa3 supercomplex; its deletion however leaves complex activity unaffected.

It is found in the cell membrane. This is an uncharacterized protein from Corynebacterium glutamicum (strain ATCC 13032 / DSM 20300 / JCM 1318 / BCRC 11384 / CCUG 27702 / LMG 3730 / NBRC 12168 / NCIMB 10025 / NRRL B-2784 / 534).